Consider the following 605-residue polypeptide: SET domain-containing protein SNOG_11806 (605 aa).

Positions Thr68–Val132 are disordered. Over residues Lys75–Val89 the composition is skewed to polar residues. Residues Glu104–Asp115 are compositionally biased toward acidic residues. The 107-residue stretch at Pro473–Gly579 folds into the SET domain.

This sequence belongs to the class V-like SAM-binding methyltransferase superfamily.

This chain is SET domain-containing protein SNOG_11806, found in Phaeosphaeria nodorum (strain SN15 / ATCC MYA-4574 / FGSC 10173) (Glume blotch fungus).